A 190-amino-acid polypeptide reads, in one-letter code: Ribosome maturation factor RimM (190 aa).

The region spanning E102–D190 is the PRC barrel domain.

It belongs to the RimM family. In terms of assembly, binds ribosomal protein uS19.

The protein resides in the cytoplasm. Functionally, an accessory protein needed during the final step in the assembly of 30S ribosomal subunit, possibly for assembly of the head region. Essential for efficient processing of 16S rRNA. May be needed both before and after RbfA during the maturation of 16S rRNA. It has affinity for free ribosomal 30S subunits but not for 70S ribosomes. The protein is Ribosome maturation factor RimM of Bordetella avium (strain 197N).